A 173-amino-acid polypeptide reads, in one-letter code: MGIKQYSQEELKEMALVEIAHELFEEHKKPVPFQELLNEIASLLGVKKEELGDRIAQFYTDLNIDGRFLALSDQTWGLRSWYPYDQLDEETQPTVKAKKKKAKKAVEEDLDLDEFEEIDEDDLDLDEVEEELDLEADDFDEEDLDEDDDDLEIEEDIIDEDDEDYDDEEEEIK.

In terms of domain architecture, HTH HARE-type spans 14–81; it reads MALVEIAHEL…SDQTWGLRSW (68 aa). Residues 110–173 form a disordered region; it reads LDLDEFEEID…DYDDEEEEIK (64 aa).

Belongs to the RpoE family. RNAP is composed of a core of 2 alpha, a beta and a beta' subunit. The core is associated with a delta subunit, and at least one of epsilon or omega. When a sigma factor is associated with the core the holoenzyme is formed, which can initiate transcription.

Participates in both the initiation and recycling phases of transcription. In the presence of the delta subunit, RNAP displays an increased specificity of transcription, a decreased affinity for nucleic acids, and an increased efficiency of RNA synthesis because of enhanced recycling. May function in sigma factor switching. It displaces RNA bound to RNA polymerase in a binary complex. This is DNA-directed RNA polymerase subunit delta from Bacillus subtilis (strain 168).